We begin with the raw amino-acid sequence, 206 residues long: Pyridoxine/pyridoxamine 5'-phosphate oxidase (206 aa).

FMN contacts are provided by residues 53 to 58, 68 to 69, K75, and Q97; these read RMVLLK and YT. K58 provides a ligand contact to substrate. Positions 115, 119, and 123 each coordinate substrate. Residues 132–133 and W177 each bind FMN; that span reads QS. Substrate is bound at residue 183–185; the sequence is RLH. R187 is an FMN binding site.

The protein belongs to the pyridoxamine 5'-phosphate oxidase family. Homodimer. The cofactor is FMN.

It catalyses the reaction pyridoxamine 5'-phosphate + O2 + H2O = pyridoxal 5'-phosphate + H2O2 + NH4(+). The enzyme catalyses pyridoxine 5'-phosphate + O2 = pyridoxal 5'-phosphate + H2O2. It functions in the pathway cofactor metabolism; pyridoxal 5'-phosphate salvage; pyridoxal 5'-phosphate from pyridoxamine 5'-phosphate: step 1/1. The protein operates within cofactor metabolism; pyridoxal 5'-phosphate salvage; pyridoxal 5'-phosphate from pyridoxine 5'-phosphate: step 1/1. Functionally, catalyzes the oxidation of either pyridoxine 5'-phosphate (PNP) or pyridoxamine 5'-phosphate (PMP) into pyridoxal 5'-phosphate (PLP). The sequence is that of Pyridoxine/pyridoxamine 5'-phosphate oxidase from Rhizobium johnstonii (strain DSM 114642 / LMG 32736 / 3841) (Rhizobium leguminosarum bv. viciae).